A 339-amino-acid polypeptide reads, in one-letter code: DNA repair protein RAD51 homolog 1 (339 aa).

Residues 1 to 22 (MAMQMQLEASADTSVEEESFGP) form a disordered region. A2 is modified (N-acetylalanine). T13 is subject to Phosphothreonine. Phosphoserine is present on S14. Residues 48 to 77 (TVEAVAYAPKKELINIKGISEAKADKILTE) enclose the HhH domain. Y54 bears the Phosphotyrosine; by ABL1 mark. Residues K58 and K64 each participate in a glycyl lysine isopeptide (Lys-Gly) (interchain with G-Cter in ubiquitin) cross-link. ATP is bound at residue 127-134 (GEFRTGKT). Positions 184-257 (DVLDNVAYAR…FLRMLLRLAD (74 aa)) are interaction with PALB2. A Nuclear export signal; masked by the interaction with BRCA2 motif is present at residues 245–260 (LARFLRMLLRLADEFG). T309 is modified (phosphothreonine; by CHEK1).

Belongs to the RecA family. RAD51 subfamily. As to quaternary structure, forms linear homooligomers, giving rise to a RAD51 nucleoprotein filament, which is essential for strand-pairing reactions during DNA recombination. Interacts with BRCA1 and either directly or indirectly with p53. Interacts with XRCC3, RAD54L and RAD54B. Interacts with the BCDX2 subcomplex RAD51C:RAD51B. Component of the homologous recombination repair (HR) complex composed of ERCC5/XPG, BRCA2, PALB2, DSS1 and RAD51. Interacts directly with PALB2 which may serve as a scaffold for a HR complex containing PALB2, BRCA2, RAD51C, RAD51 and XRCC3. Interacts with RAD51AP1 and RAD51AP2. Interacts with CHEK1, and this may require prior phosphorylation of CHEK1. Interacts with the MND1-PSMC3IP heterodimer. Found in a complex, at least composed of BLM, RAD51 and SPIDR; the complex formation is mediated by SPIDR. Interacts with SPIDR; the interaction is direct and recruits RAD51 to DNA damage sites. Interacts with FIGNL1 (via N-terminal one-half region); the interaction is direct. Interacts with RAD51AP1 (via C-terminal region); the interaction is direct. Interacts with NABP2, RPA1, PALB2 and RAD51. Interacts with SWI5/C9orf119, and at lower level with SFR1/MEIR5. Interacts with hyperphosphorylated RPA2; this interaction is necessary for efficient recruitment to chromatin in response to DNA damage. Interacts with SWSAP1; involved in homologous recombination repair. Interacts with PARPBP, BRCA2 and RECQL5; these interactions interfere with the formation of the RAD51-DNA homologous recombination structure. Interacts with POLQ; POLQ acts as an inhibitor of homology-recombination repair (HR) pathway by limiting RAD51 accumulation at resected ends. Interacts with POLN. Interacts with FBH1. Interacts with RFWD3. Interacts with the MCM8-MCM9 complex; the interaction recruits RAD51 to DNA damage sites. Component of a multiprotein complex with MEIOB and SPATA22. Interacts with the complex BRME1:HSF2BP:BRCA2. Interacts with HELQ; stimulating HELQ DNA helicase activity and ability to unwing DNA. Interacts with MMS22L; the interaction is direct and promotes recruitment of RAD51 to sites of DNA damage. Interacts with the ATAD5 RFC-like complex. Within the ATAD5 RFC-like complex, interacts with ATAD5 (via N-terminus); the interaction is direct and enhanced under replication stress. Interacts with WDR48; the interaction is enhanced under replication stress. Interacts with DNA helicase ZGRF1; the interaction promotes RAD51 strand exchange activity. Interacts (when phosphorylated) with TOPBP1; interaction takes place following phosphorylation by CK2 and PLK1 and promotes recruitment to DNA damage sites. Interacts with GRB2; this interaction inhibits RAD51 ATPase activity to stabilize RAD51 on stalled replication forks. Post-translationally, ubiquitinated by the SCF(FBH1) E3 ubiquitin ligase complex, regulating RAD51 subcellular location and preventing its association with DNA. Ubiquitinated by RFWD3 in response to DNA damage: ubiquitination leads to degradation by the proteasome, promoting homologous recombination. Phosphorylation of Thr-309 by CHEK1 may enhance association with chromatin at sites of DNA damage and promote DNA repair by homologous recombination. Phosphorylated at Ser-14 by PLK1, triggering phosphorylation at Thr-13 by CK2, thereby promoting interaction with TOPBP1 and recruitment to DNA damage sites during S-phase. Phosphorylation by ABL1 inhibits function. Expressed in the testes (at protein level). Expressed in the brain (at protein level). Expressed in the thymus, spleen, ovary and small intestine.

It localises to the nucleus. It is found in the cytoplasm. The protein localises to the perinuclear region. Its subcellular location is the mitochondrion matrix. The protein resides in the chromosome. It localises to the cytoskeleton. It is found in the microtubule organizing center. The protein localises to the centrosome. Functionally, plays an important role in homologous strand exchange, a key step in DNA repair through homologous recombination (HR). Binds to single-stranded DNA in an ATP-dependent manner to form nucleoprotein filaments which are essential for the homology search and strand exchange. Catalyzes the recognition of homology and strand exchange between homologous DNA partners to form a joint molecule between a processed DNA break and the repair template. Recruited to resolve stalled replication forks during replication stress. Part of a PALB2-scaffolded HR complex containing BRCA2 and RAD51C and which is thought to play a role in DNA repair by HR. Plays a role in regulating mitochondrial DNA copy number under conditions of oxidative stress in the presence of RAD51C and XRCC3. Also involved in interstrand cross-link repair. The protein is DNA repair protein RAD51 homolog 1 of Mus musculus (Mouse).